A 185-amino-acid polypeptide reads, in one-letter code: Ribosome-recycling factor (185 aa).

The protein belongs to the RRF family.

The protein resides in the cytoplasm. In terms of biological role, responsible for the release of ribosomes from messenger RNA at the termination of protein biosynthesis. May increase the efficiency of translation by recycling ribosomes from one round of translation to another. The chain is Ribosome-recycling factor from Campylobacter concisus (strain 13826).